The following is a 237-amino-acid chain: NAD(P)H-hydrate epimerase (237 aa).

A YjeF N-terminal domain is found at 11-223; it reads AASLDRDLMN…GLDIPEYPGV (213 aa). Position 61 to 65 (61 to 65) interacts with (6S)-NADPHX; that stretch reads NNGGD. Residues asparagine 62 and aspartate 123 each contribute to the K(+) site. Residues 127 to 133 and aspartate 156 contribute to the (6S)-NADPHX site; that span reads GFSFSGP. Serine 159 provides a ligand contact to K(+).

The protein belongs to the NnrE/AIBP family. The cofactor is K(+).

Its subcellular location is the cytoplasm. The protein localises to the mitochondrion. The catalysed reaction is (6R)-NADHX = (6S)-NADHX. It carries out the reaction (6R)-NADPHX = (6S)-NADPHX. In terms of biological role, catalyzes the epimerization of the S- and R-forms of NAD(P)HX, a damaged form of NAD(P)H that is a result of enzymatic or heat-dependent hydration. This is a prerequisite for the S-specific NAD(P)H-hydrate dehydratase to allow the repair of both epimers of NAD(P)HX. This chain is NAD(P)H-hydrate epimerase, found in Ajellomyces capsulatus (strain G186AR / H82 / ATCC MYA-2454 / RMSCC 2432) (Darling's disease fungus).